The primary structure comprises 1138 residues: Eukaryotic translation initiation factor 3 subunit A (1138 aa).

The PCI domain maps to 319-502 (LQRMAAHVLL…NSIYFGTDLT (184 aa)). 2 disordered regions span residues 590-633 (NNAR…NEIQ) and 817-1138 (ERFR…VKRR). Composition is skewed to basic and acidic residues over residues 817 to 903 (ERFR…RVER), 923 to 967 (DRNE…KEND), 1003 to 1049 (GRDD…DQPQ), and 1058 to 1078 (DSPR…RDVR). Gly residues predominate over residues 1082-1100 (PKEGGGGVSGGGAGGGGGN). Basic and acidic residues predominate over residues 1107–1128 (PREEKAPPKREQAQDKENKAGD).

It belongs to the eIF-3 subunit A family. In terms of assembly, component of the eukaryotic translation initiation factor 3 (eIF-3) complex. The eIF-3 complex interacts with pix.

It localises to the cytoplasm. Its function is as follows. RNA-binding component of the eukaryotic translation initiation factor 3 (eIF-3) complex, which is involved in protein synthesis of a specialized repertoire of mRNAs and, together with other initiation factors, stimulates binding of mRNA and methionyl-tRNAi to the 40S ribosome. The eIF-3 complex specifically targets and initiates translation of a subset of mRNAs involved in cell proliferation. The chain is Eukaryotic translation initiation factor 3 subunit A from Drosophila virilis (Fruit fly).